The primary structure comprises 420 residues: D-tagatose-1,6-bisphosphate aldolase subunit GatZ (420 aa).

This sequence belongs to the GatZ/KbaZ family. GatZ subfamily. Forms a complex with GatY.

It participates in carbohydrate metabolism; D-tagatose 6-phosphate degradation; D-glyceraldehyde 3-phosphate and glycerone phosphate from D-tagatose 6-phosphate: step 2/2. Component of the tagatose-1,6-bisphosphate aldolase GatYZ that is required for full activity and stability of the Y subunit. Could have a chaperone-like function for the proper and stable folding of GatY. When expressed alone, GatZ does not show any aldolase activity. Is involved in the catabolism of galactitol. The polypeptide is D-tagatose-1,6-bisphosphate aldolase subunit GatZ (Shigella flexneri serotype 5b (strain 8401)).